The primary structure comprises 288 residues: Bifunctional protein FolD (288 aa).

NADP(+)-binding positions include 166–168 (GRS), Ser191, and Val232.

It belongs to the tetrahydrofolate dehydrogenase/cyclohydrolase family. In terms of assembly, homodimer.

The enzyme catalyses (6R)-5,10-methylene-5,6,7,8-tetrahydrofolate + NADP(+) = (6R)-5,10-methenyltetrahydrofolate + NADPH. It carries out the reaction (6R)-5,10-methenyltetrahydrofolate + H2O = (6R)-10-formyltetrahydrofolate + H(+). It participates in one-carbon metabolism; tetrahydrofolate interconversion. Catalyzes the oxidation of 5,10-methylenetetrahydrofolate to 5,10-methenyltetrahydrofolate and then the hydrolysis of 5,10-methenyltetrahydrofolate to 10-formyltetrahydrofolate. This chain is Bifunctional protein FolD, found in Roseiflexus castenholzii (strain DSM 13941 / HLO8).